Reading from the N-terminus, the 344-residue chain is Phenylalanine--tRNA ligase alpha subunit (344 aa).

Mg(2+) is bound at residue glutamate 256.

It belongs to the class-II aminoacyl-tRNA synthetase family. Phe-tRNA synthetase alpha subunit type 1 subfamily. In terms of assembly, tetramer of two alpha and two beta subunits. The cofactor is Mg(2+).

Its subcellular location is the cytoplasm. It catalyses the reaction tRNA(Phe) + L-phenylalanine + ATP = L-phenylalanyl-tRNA(Phe) + AMP + diphosphate + H(+). This is Phenylalanine--tRNA ligase alpha subunit from Geobacillus thermodenitrificans (strain NG80-2).